A 78-amino-acid chain; its full sequence is Large ribosomal subunit protein bL28 (78 aa).

This sequence belongs to the bacterial ribosomal protein bL28 family.

This is Large ribosomal subunit protein bL28 from Francisella philomiragia subsp. philomiragia (strain ATCC 25017 / CCUG 19701 / FSC 153 / O#319-036).